The following is a 567-amino-acid chain: Proline--tRNA ligase (567 aa).

This sequence belongs to the class-II aminoacyl-tRNA synthetase family. ProS type 1 subfamily. Homodimer.

The protein localises to the cytoplasm. The enzyme catalyses tRNA(Pro) + L-proline + ATP = L-prolyl-tRNA(Pro) + AMP + diphosphate. Functionally, catalyzes the attachment of proline to tRNA(Pro) in a two-step reaction: proline is first activated by ATP to form Pro-AMP and then transferred to the acceptor end of tRNA(Pro). As ProRS can inadvertently accommodate and process non-cognate amino acids such as alanine and cysteine, to avoid such errors it has two additional distinct editing activities against alanine. One activity is designated as 'pretransfer' editing and involves the tRNA(Pro)-independent hydrolysis of activated Ala-AMP. The other activity is designated 'posttransfer' editing and involves deacylation of mischarged Ala-tRNA(Pro). The misacylated Cys-tRNA(Pro) is not edited by ProRS. This chain is Proline--tRNA ligase, found in Geobacillus thermodenitrificans (strain NG80-2).